The sequence spans 407 residues: Elongation factor Tu (407 aa).

A tr-type G domain is found at 10 to 217 (KPHVNVGTIG…TLDTYIPDPE (208 aa)). Residues 19–26 (GHVDHGKT) form a G1 region. 19 to 26 (GHVDHGKT) contacts GTP. Thr-26 serves as a coordination point for Mg(2+). The G2 stretch occupies residues 60–64 (GITIS). Residues 81 to 84 (DCPG) form a G3 region. Residues 81 to 85 (DCPGH) and 136 to 139 (NKSD) contribute to the GTP site. The G4 stretch occupies residues 136 to 139 (NKSD). The segment at 184–186 (SAL) is G5.

The protein belongs to the TRAFAC class translation factor GTPase superfamily. Classic translation factor GTPase family. EF-Tu/EF-1A subfamily. In terms of assembly, monomer.

The protein localises to the cytoplasm. The catalysed reaction is GTP + H2O = GDP + phosphate + H(+). Its function is as follows. GTP hydrolase that promotes the GTP-dependent binding of aminoacyl-tRNA to the A-site of ribosomes during protein biosynthesis. This Marinomonas sp. (strain MWYL1) protein is Elongation factor Tu.